The sequence spans 399 residues: DJ-1 protein homolog F (399 aa).

PfpI endopeptidase domains are found at residues 7–199 (KSVL…ESLG) and 211–394 (TSLL…TALG).

It belongs to the peptidase C56 family. Homotrimer.

In terms of biological role, may be involved in oxidative stress response. This Arabidopsis thaliana (Mouse-ear cress) protein is DJ-1 protein homolog F (DJ1F).